The primary structure comprises 357 residues: U3 small nucleolar ribonucleoprotein protein LCP5 (357 aa).

S2 carries the post-translational modification N-acetylserine. Disordered regions lie at residues 146–211 (STLV…YKPP) and 301–357 (NKAE…QRRL). The segment covering 155–166 (DDSEDDESSEDE) has biased composition (acidic residues). The segment covering 171–183 (PNTSGIINTNKKS) has biased composition (polar residues). 2 stretches are compositionally biased toward basic and acidic residues: residues 187 to 196 (RVEETAKQEN) and 348 to 357 (SAWDRAQRRL).

It is found in the nucleus. The protein resides in the nucleolus. Component of the U3 small nucleolar ribonucleoprotein. Required for the early cleavages at sites A0, A1 and A2 of the pre-ribosomal RNA. Participates in ribosome biogenesis. The sequence is that of U3 small nucleolar ribonucleoprotein protein LCP5 (LCP5) from Saccharomyces cerevisiae (strain ATCC 204508 / S288c) (Baker's yeast).